Here is a 317-residue protein sequence, read N- to C-terminus: WSCD family member CG9164 (317 aa).

Residues 8–28 (FFGVSATIIIYIGGVLFLSMN) form a helical membrane-spanning segment. N-linked (GlcNAc...) asparagine glycans are attached at residues N151, N227, and N233.

This sequence belongs to the WSCD family.

It is found in the membrane. This chain is WSCD family member CG9164, found in Drosophila melanogaster (Fruit fly).